We begin with the raw amino-acid sequence, 329 residues long: DNA-directed RNA polymerase subunit alpha (329 aa).

Residues 1 to 235 (MQGSVTEFLK…EQLEAFVDLR (235 aa)) are alpha N-terminal domain (alpha-NTD). The interval 249–329 (FDPILLRPVD…NWPPASIADE (81 aa)) is alpha C-terminal domain (alpha-CTD).

The protein belongs to the RNA polymerase alpha chain family. Homodimer. The RNAP catalytic core consists of 2 alpha, 1 beta, 1 beta' and 1 omega subunit. When a sigma factor is associated with the core the holoenzyme is formed, which can initiate transcription.

The catalysed reaction is RNA(n) + a ribonucleoside 5'-triphosphate = RNA(n+1) + diphosphate. Its function is as follows. DNA-dependent RNA polymerase catalyzes the transcription of DNA into RNA using the four ribonucleoside triphosphates as substrates. This is DNA-directed RNA polymerase subunit alpha from Sodalis glossinidius (strain morsitans).